The sequence spans 162 residues: EF-hand calcium-binding domain-containing protein 11 (162 aa).

EF-hand domains lie at 18 to 53 (SERR…LFGY), 91 to 126 (LYRN…VAPK), and 127 to 162 (LPAR…GQSK). Ca(2+)-binding residues include aspartate 140, aspartate 142, aspartate 144, histidine 146, and aspartate 151.

The sequence is that of EF-hand calcium-binding domain-containing protein 11 (Efcab11) from Mus musculus (Mouse).